A 374-amino-acid chain; its full sequence is Nucleosome assembly protein 1;3 (374 aa).

Residues 26-80 (VNALKNKLQNLAGQHSDVLENLTPKIRRRVEVLREIQGKHDEIETKFREERAALE) adopt a coiled-coil conformation. Residue serine 41 is modified to Phosphoserine. The short motif at 47 to 62 (LTPKIRRRVEVLREIQ) is the Nuclear export signal element. A Nuclear localization signal motif is present at residues 222-227 (KKKPKK). Residues 299-339 (IEGEEFEIDNDDEDDIDEDEDEDEEDEDEDEEEDDEDEEEE) show a composition bias toward acidic residues. The interval 299-374 (IEGEEFEIDN…GERPPECKQQ (76 aa)) is disordered. Positions 343–355 (TKKKPSVLHKKGG) are enriched in basic residues. Residues 364 to 374 (QGERPPECKQQ) show a composition bias toward basic and acidic residues. A Cysteine methyl ester modification is found at cysteine 371. Cysteine 371 carries S-farnesyl cysteine lipidation. A propeptide spans 372 to 374 (KQQ) (removed in mature form).

This sequence belongs to the nucleosome assembly protein (NAP) family. As to quaternary structure, can form homomeric and heteromeric protein complexes with NAP1;1, NAP1;2 and NAP1;4. Binds histone H2A and associates with chromatin in vivo. Ubiquitous.

The protein localises to the nucleus. The protein resides in the cytoplasm. In terms of biological role, may modulate chromatin structure by regulation of nucleosome assembly/disassembly. May function in nucleotide excision repair (NER). Involved in somatic homologous recombination. Could be involved in response to abscisic acid (ABA) and to salt stress. This Arabidopsis thaliana (Mouse-ear cress) protein is Nucleosome assembly protein 1;3 (NAP1;3).